Here is a 282-residue protein sequence, read N- to C-terminus: 4-hydroxy-3-methylbut-2-enyl diphosphate reductase (282 aa).

A [4Fe-4S] cluster-binding site is contributed by cysteine 14. The (2E)-4-hydroxy-3-methylbut-2-enyl diphosphate site is built by histidine 43 and histidine 78. Dimethylallyl diphosphate-binding residues include histidine 43 and histidine 78. Isopentenyl diphosphate is bound by residues histidine 43 and histidine 78. Cysteine 100 lines the [4Fe-4S] cluster pocket. Residue histidine 128 participates in (2E)-4-hydroxy-3-methylbut-2-enyl diphosphate binding. Histidine 128 contributes to the dimethylallyl diphosphate binding site. Histidine 128 serves as a coordination point for isopentenyl diphosphate. Glutamate 130 (proton donor) is an active-site residue. Position 164 (threonine 164) interacts with (2E)-4-hydroxy-3-methylbut-2-enyl diphosphate. Cysteine 192 is a binding site for [4Fe-4S] cluster. (2E)-4-hydroxy-3-methylbut-2-enyl diphosphate contacts are provided by serine 220, serine 221, asparagine 222, and serine 266. Positions 220, 221, 222, and 266 each coordinate dimethylallyl diphosphate. 4 residues coordinate isopentenyl diphosphate: serine 220, serine 221, asparagine 222, and serine 266.

Belongs to the IspH family. The cofactor is [4Fe-4S] cluster.

The catalysed reaction is isopentenyl diphosphate + 2 oxidized [2Fe-2S]-[ferredoxin] + H2O = (2E)-4-hydroxy-3-methylbut-2-enyl diphosphate + 2 reduced [2Fe-2S]-[ferredoxin] + 2 H(+). The enzyme catalyses dimethylallyl diphosphate + 2 oxidized [2Fe-2S]-[ferredoxin] + H2O = (2E)-4-hydroxy-3-methylbut-2-enyl diphosphate + 2 reduced [2Fe-2S]-[ferredoxin] + 2 H(+). It functions in the pathway isoprenoid biosynthesis; dimethylallyl diphosphate biosynthesis; dimethylallyl diphosphate from (2E)-4-hydroxy-3-methylbutenyl diphosphate: step 1/1. Its pathway is isoprenoid biosynthesis; isopentenyl diphosphate biosynthesis via DXP pathway; isopentenyl diphosphate from 1-deoxy-D-xylulose 5-phosphate: step 6/6. Its function is as follows. Catalyzes the conversion of 1-hydroxy-2-methyl-2-(E)-butenyl 4-diphosphate (HMBPP) into a mixture of isopentenyl diphosphate (IPP) and dimethylallyl diphosphate (DMAPP). Acts in the terminal step of the DOXP/MEP pathway for isoprenoid precursor biosynthesis. In Clostridium perfringens (strain ATCC 13124 / DSM 756 / JCM 1290 / NCIMB 6125 / NCTC 8237 / Type A), this protein is 4-hydroxy-3-methylbut-2-enyl diphosphate reductase.